The chain runs to 146 residues: Hemoglobin subunit beta (146 aa).

Position 1 is an N-acetylvaline (V1). Residues 2–146 (HLSGGEKSAV…VAHALGHKYH (145 aa)) enclose the Globin domain. T12 carries the phosphothreonine modification. N6-acetyllysine is present on K59. H63 lines the heme b pocket. An N6-acetyllysine modification is found at K82. H92 contributes to the heme b binding site. C93 is subject to S-nitrosocysteine. At K144 the chain carries N6-acetyllysine.

Belongs to the globin family. Heterotetramer of two alpha chains and two beta chains. As to expression, red blood cells.

Functionally, involved in oxygen transport from the lung to the various peripheral tissues. The protein is Hemoglobin subunit beta (HBB) of Ornithorhynchus anatinus (Duckbill platypus).